A 207-amino-acid chain; its full sequence is Ion-translocating oxidoreductase complex subunit G (207 aa).

Residues 11–31 (GILLGFIALLCTIISTGIFFL) form a helical membrane-spanning segment. Thr-175 is modified (FMN phosphoryl threonine).

This sequence belongs to the RnfG family. As to quaternary structure, the complex is composed of six subunits: RnfA, RnfB, RnfC, RnfD, RnfE and RnfG. FMN is required as a cofactor.

Its subcellular location is the cell inner membrane. Part of a membrane-bound complex that couples electron transfer with translocation of ions across the membrane. In Haemophilus influenzae (strain 86-028NP), this protein is Ion-translocating oxidoreductase complex subunit G.